Consider the following 323-residue polypeptide: MKVLWAALVVTLLAGCWADVQPEPELERELEPKVQQELEPEAGWQTGQPWEAALARFWDYLRWVQTLSDQVQEGVLNTQVTQELTALMDETMKEVKAYKAELDEQLGPMTSETQARVAKELQAAQARLRSDMEDVRNRLTQYRGELQAMLGQSSEELRARFASHMRKLRKRVLRDAEDLQRRLAVYKAGVREGAERSVSSIRERLWPLLEQARERNAKVGALATQPLLERADALGQQLRGQLEEMSSRARGHLEEMREQIQEVRVKMEEQADQIRQKAEAFQARLKSWFEPLLEDMQRQWDGLVEKVQAAVATIPTSKPVEEP.

A signal peptide spans 1 to 18; it reads MKVLWAALVVTLLAGCWA. 8 tandem repeats follow at residues 86–107, 108–129, 130–151, 152–173, 174–195, 196–217, 218–239, and 240–261. Residues 86–261 form an 8 X 22 AA approximate tandem repeats region; that stretch reads ALMDETMKEV…HLEEMREQIQ (176 aa). Residue M149 is modified to Methionine sulfoxide. Phosphoserine is present on S153. The LDL and other lipoprotein receptors binding stretch occupies residues 164–174; the sequence is HMRKLRKRVLR. 168 to 171 lines the heparin pocket; that stretch reads LRKR. The interval 216 to 296 is lipid-binding and lipoprotein association; it reads NAKVGALATQ…SWFEPLLEDM (81 aa). 235 to 242 contributes to the heparin binding site; it reads GQQLRGQL. The homooligomerization stretch occupies residues 272–323; sequence DQIRQKAEAFQARLKSWFEPLLEDMQRQWDGLVEKVQAAVATIPTSKPVEEP. The specificity for association with VLDL stretch occupies residues 284 to 296; it reads RLKSWFEPLLEDM.

This sequence belongs to the apolipoprotein A1/A4/E family. As to quaternary structure, homotetramer. May interact with ABCA1; functionally associated with ABCA1 in the biogenesis of HDLs. May interact with APP/A4 amyloid-beta peptide; the interaction is extremely stable in vitro but its physiological significance is unclear. May interact with MAPT. May interact with MAP2. In the cerebrospinal fluid, interacts with secreted SORL1. Interacts with PMEL; this allows the loading of PMEL luminal fragment on ILVs to induce fibril nucleation. APOE exists as multiple glycosylated and sialylated glycoforms within cells and in plasma. The extent of glycosylation and sialylation are tissue and context specific. Post-translationally, glycated in plasma VLDL. In terms of processing, phosphorylated by FAM20C in the extracellular medium.

The protein resides in the secreted. It localises to the extracellular space. The protein localises to the extracellular matrix. Its subcellular location is the extracellular vesicle. It is found in the endosome. The protein resides in the multivesicular body. Functionally, APOE is an apolipoprotein, a protein associating with lipid particles, that mainly functions in lipoprotein-mediated lipid transport between organs via the plasma and interstitial fluids. APOE is a core component of plasma lipoproteins and is involved in their production, conversion and clearance. Apolipoproteins are amphipathic molecules that interact both with lipids of the lipoprotein particle core and the aqueous environment of the plasma. As such, APOE associates with chylomicrons, chylomicron remnants, very low density lipoproteins (VLDL) and intermediate density lipoproteins (IDL) but shows a preferential binding to high-density lipoproteins (HDL). It also binds a wide range of cellular receptors including the LDL receptor/LDLR and the very low-density lipoprotein receptor/VLDLR that mediate the cellular uptake of the APOE-containing lipoprotein particles. Finally, APOE also has a heparin-binding activity and binds heparan-sulfate proteoglycans on the surface of cells, a property that supports the capture and the receptor-mediated uptake of APOE-containing lipoproteins by cells. The chain is Apolipoprotein E (APOE) from Canis lupus familiaris (Dog).